Reading from the N-terminus, the 195-residue chain is Imidazoleglycerol-phosphate dehydratase (195 aa).

This sequence belongs to the imidazoleglycerol-phosphate dehydratase family.

Its subcellular location is the cytoplasm. The enzyme catalyses D-erythro-1-(imidazol-4-yl)glycerol 3-phosphate = 3-(imidazol-4-yl)-2-oxopropyl phosphate + H2O. Its pathway is amino-acid biosynthesis; L-histidine biosynthesis; L-histidine from 5-phospho-alpha-D-ribose 1-diphosphate: step 6/9. In Paracoccus denitrificans (strain Pd 1222), this protein is Imidazoleglycerol-phosphate dehydratase.